Consider the following 519-residue polypeptide: Probable cytochrome P450 6g2 (519 aa).

Residue Cys-460 participates in heme binding.

It belongs to the cytochrome P450 family. The cofactor is heme.

Its subcellular location is the endoplasmic reticulum membrane. It localises to the microsome membrane. In terms of biological role, may be involved in the metabolism of insect hormones and in the breakdown of synthetic insecticides. The polypeptide is Probable cytochrome P450 6g2 (Cyp6g2) (Drosophila melanogaster (Fruit fly)).